A 108-amino-acid polypeptide reads, in one-letter code: MTDQLLVTTTENIPNQKYEIIGEVFGVTTQSKNALRDLGAGLKSIVGGEIKAYTSMLTESRDQAINRLCENAANLGADAVVMMRFDSGSIAGDMQSVVAYGTAVKFID.

Belongs to the UPF0145 family.

The sequence is that of UPF0145 protein LGAS_1099 from Lactobacillus gasseri (strain ATCC 33323 / DSM 20243 / BCRC 14619 / CIP 102991 / JCM 1131 / KCTC 3163 / NCIMB 11718 / NCTC 13722 / AM63).